The primary structure comprises 324 residues: Olfactory receptor 6K2 (324 aa).

At 1 to 25 the chain is on the extracellular side; sequence MESPNRTTIQEFIFSAFPYSWVKSV. N-linked (GlcNAc...) asparagine glycosylation is present at Asn-5. The helical transmembrane segment at 26-46 threads the bilayer; it reads VCFVPLLFIYAFIVVGNLVII. Residues 47–54 lie on the Cytoplasmic side of the membrane; sequence TVVQLNTH. The helical transmembrane segment at 55 to 75 threads the bilayer; sequence LHTPMYTFISALSFLEIWYTT. Residues 76–98 lie on the Extracellular side of the membrane; the sequence is ATIPKMLSSLLSERSISFNGCLL. A disulfide bridge links Cys-96 with Cys-188. A helical membrane pass occupies residues 99 to 119; it reads QMYFFHSTGICEVCLLTVMAF. The Cytoplasmic portion of the chain corresponds to 120–138; it reads DHYLAICSPLHYPSIMTPK. Residues 139 to 159 form a helical membrane-spanning segment; the sequence is LCTQLTLSCCVCGFITPLPEI. The Extracellular portion of the chain corresponds to 160 to 198; sequence AWISTLPFCGSNHLEHIFCDFLPVLRLACTDTRAIVMIQ. Residues 199–218 traverse the membrane as a helical segment; the sequence is VVDVIHAVEIITAVMLIFMS. Topologically, residues 219–238 are cytoplasmic; sequence YDGIVAVILRIHSAGGRRTA. Residues 239 to 259 traverse the membrane as a helical segment; it reads FSTCVSHFIVFSLFFGSVTLM. The Extracellular segment spans residues 260-272; the sequence is YLRFSATYSLFWD. A helical membrane pass occupies residues 273 to 293; it reads IAIALAFAVLSPFFNPIIYSL. Residues 294-324 lie on the Cytoplasmic side of the membrane; that stretch reads RNKEIKEAIKKHIGQAKIFFSVRPGTSSKIF.

The protein belongs to the G-protein coupled receptor 1 family.

The protein resides in the cell membrane. Functionally, odorant receptor. This is Olfactory receptor 6K2 (OR6K2) from Homo sapiens (Human).